Reading from the N-terminus, the 195-residue chain is Dephospho-CoA kinase (195 aa).

The region spanning 3–195 is the DPCK domain; sequence IVGLTGGIGS…IALHENYLNH (193 aa). Residue 11–16 coordinates ATP; it reads GSGKSA.

Belongs to the CoaE family.

It is found in the cytoplasm. The enzyme catalyses 3'-dephospho-CoA + ATP = ADP + CoA + H(+). Its pathway is cofactor biosynthesis; coenzyme A biosynthesis; CoA from (R)-pantothenate: step 5/5. Functionally, catalyzes the phosphorylation of the 3'-hydroxyl group of dephosphocoenzyme A to form coenzyme A. The chain is Dephospho-CoA kinase from Acinetobacter baylyi (strain ATCC 33305 / BD413 / ADP1).